Consider the following 283-residue polypeptide: uncharacterized protein (283 aa).

This is an uncharacterized protein from Halobacterium salinarum (strain ATCC 700922 / JCM 11081 / NRC-1) (Halobacterium halobium).